The chain runs to 377 residues: Queuine tRNA-ribosyltransferase (377 aa).

Aspartate 94 serves as the catalytic Proton acceptor. Substrate-binding positions include 94 to 98 (DSGGF), aspartate 148, glutamine 191, and glycine 218. The tract at residues 249–255 (GVGTPDD) is RNA binding. Aspartate 268 functions as the Nucleophile in the catalytic mechanism. The segment at 273–277 (TRAGR) is RNA binding; important for wobble base 34 recognition.

This sequence belongs to the queuine tRNA-ribosyltransferase family. Homodimer. Within each dimer, one monomer is responsible for RNA recognition and catalysis, while the other monomer binds to the replacement base PreQ1.

It catalyses the reaction 7-aminomethyl-7-carbaguanine + guanosine(34) in tRNA = 7-aminomethyl-7-carbaguanosine(34) in tRNA + guanine. It functions in the pathway tRNA modification; tRNA-queuosine biosynthesis. Catalyzes the base-exchange of a guanine (G) residue with the queuine precursor 7-aminomethyl-7-deazaguanine (PreQ1) at position 34 (anticodon wobble position) in tRNAs with GU(N) anticodons (tRNA-Asp, -Asn, -His and -Tyr). Catalysis occurs through a double-displacement mechanism. The nucleophile active site attacks the C1' of nucleotide 34 to detach the guanine base from the RNA, forming a covalent enzyme-RNA intermediate. The proton acceptor active site deprotonates the incoming PreQ1, allowing a nucleophilic attack on the C1' of the ribose to form the product. After dissociation, two additional enzymatic reactions on the tRNA convert PreQ1 to queuine (Q), resulting in the hypermodified nucleoside queuosine (7-(((4,5-cis-dihydroxy-2-cyclopenten-1-yl)amino)methyl)-7-deazaguanosine). The chain is Queuine tRNA-ribosyltransferase from Brucella melitensis biotype 1 (strain ATCC 23456 / CCUG 17765 / NCTC 10094 / 16M).